A 476-amino-acid polypeptide reads, in one-letter code: Exoglucanase-6A (476 aa).

The signal sequence occupies residues Met-1–Ala-16. Disulfide bonds link Cys-33-Cys-50 and Cys-44-Cys-60. The region spanning Cys-33–Cys-60 is the CBM1 domain. The segment at Thr-67 to Ser-94 is disordered. Residue Thr-144 is glycosylated (O-linked (Man...) threonine). Ser-153 carries an O-linked (Man...) serine glycan. Positions 163 and 165 each coordinate substrate. A glycan (N-linked (GlcNAc...) asparagine) is linked at Asn-167. The interval Tyr-200–Gly-222 is substrate binding loop 1. Residue Asp-252 is the Proton donor of the active site. 6 residues coordinate substrate: His-297, Trp-300, Asn-336, Trp-397, Lys-425, and Glu-429. Residues Trp-423–Phe-461 form a substrate binding loop 2 region. Asp-431 acts as the Proton acceptor in catalysis.

The protein belongs to the glycosyl hydrolase 6 (cellulase A) family. In terms of assembly, monomer.

The catalysed reaction is Hydrolysis of (1-&gt;4)-beta-D-glucosidic linkages in cellulose and cellotetraose, releasing cellobiose from the non-reducing ends of the chains.. Plays a central role in the recycling of plant biomass. The biological conversion of cellulose to glucose generally requires three types of hydrolytic enzymes: (1) Endoglucanases which cut internal beta-1,4-glucosidic bonds; (2) Exocellobiohydrolases that cut the disaccharide cellobiose from the non-reducing end of the cellulose polymer chain; (3) Beta-1,4-glucosidases which hydrolyze the cellobiose and other short cello-oligosaccharides to glucose. The chain is Exoglucanase-6A from Humicola insolens (Soft-rot fungus).